The chain runs to 457 residues: Chromosomal replication initiator protein DnaA (457 aa).

A domain I, interacts with DnaA modulators region spans residues 1–77 (MDTNNNIEKE…EILSQNKVGM (77 aa)). The domain II stretch occupies residues 77–108 (MHLAHSVDVRIEVAPKIQVNAQSNINYKATKT). A domain III, AAA+ region region spans residues 109-323 (SVKDSYTFEN…GAIIKISVNA (215 aa)). ATP contacts are provided by Gly-153, Gly-155, Lys-156, and Thr-157. Positions 324–457 (NLMNATIDLN…DKKTAFNSSE (134 aa)) are domain IV, binds dsDNA.

The protein belongs to the DnaA family. In terms of assembly, oligomerizes as a right-handed, spiral filament on DNA at oriC.

It is found in the cytoplasm. In terms of biological role, plays an essential role in the initiation and regulation of chromosomal replication. ATP-DnaA binds to the origin of replication (oriC) to initiate formation of the DNA replication initiation complex once per cell cycle. Binds the DnaA box (a 9 base pair repeat at the origin) and separates the double-stranded (ds)DNA. Forms a right-handed helical filament on oriC DNA; dsDNA binds to the exterior of the filament while single-stranded (ss)DNA is stabiized in the filament's interior. The ATP-DnaA-oriC complex binds and stabilizes one strand of the AT-rich DNA unwinding element (DUE), permitting loading of DNA polymerase. After initiation quickly degrades to an ADP-DnaA complex that is not apt for DNA replication. Binds acidic phospholipids. In Helicobacter pylori (strain J99 / ATCC 700824) (Campylobacter pylori J99), this protein is Chromosomal replication initiator protein DnaA.